The chain runs to 91 residues: Sec-independent protein translocase protein TatA (91 aa).

The chain crosses the membrane as a helical span at residues 1–21 (MGAMQPMHWLIVAVVVVILFG).

Belongs to the TatA/E family. As to quaternary structure, the Tat system comprises two distinct complexes: a TatABC complex, containing multiple copies of TatA, TatB and TatC subunits, and a separate TatA complex, containing only TatA subunits. Substrates initially bind to the TatABC complex, which probably triggers association of the separate TatA complex to form the active translocon.

The protein resides in the cell membrane. In terms of biological role, part of the twin-arginine translocation (Tat) system that transports large folded proteins containing a characteristic twin-arginine motif in their signal peptide across membranes. TatA could form the protein-conducting channel of the Tat system. In Rhodococcus erythropolis (strain PR4 / NBRC 100887), this protein is Sec-independent protein translocase protein TatA.